Here is a 356-residue protein sequence, read N- to C-terminus: Putative methylthioribose-1-phosphate isomerase (356 aa).

Residues 57–59 (RGA), arginine 100, and glutamine 206 contribute to the substrate site. The Proton donor role is filled by aspartate 247. 257–258 (NK) lines the substrate pocket.

It belongs to the eIF-2B alpha/beta/delta subunits family. MtnA subfamily.

It carries out the reaction 5-(methylsulfanyl)-alpha-D-ribose 1-phosphate = 5-(methylsulfanyl)-D-ribulose 1-phosphate. In terms of biological role, catalyzes the interconversion of methylthioribose-1-phosphate (MTR-1-P) into methylthioribulose-1-phosphate (MTRu-1-P). This Pyrococcus furiosus (strain ATCC 43587 / DSM 3638 / JCM 8422 / Vc1) protein is Putative methylthioribose-1-phosphate isomerase.